The sequence spans 95 residues: UPF0358 protein GK1077 (95 aa).

The protein belongs to the UPF0358 family.

The protein is UPF0358 protein GK1077 of Geobacillus kaustophilus (strain HTA426).